Here is a 420-residue protein sequence, read N- to C-terminus: 20-oxo-5-O-mycaminosyltylactone 23-monooxygenase (420 aa).

Residues 1–28 (MSSSGDARPSQKGILLPAARANDTDEAA) are disordered. Heme-binding residues include His-118, Arg-122, Arg-311, His-367, and Cys-369.

Belongs to the cytochrome P450 family.

The enzyme catalyses 20-oxo-5-O-beta-D-mycaminosyltylonolide + 2 reduced [2Fe-2S]-[ferredoxin] + O2 + 2 H(+) = 5-O-beta-D-mycaminosyltylonolide + 2 oxidized [2Fe-2S]-[ferredoxin] + H2O. The protein operates within antibiotic biosynthesis; tylosin biosynthesis. Its function is as follows. Involved in the biosynthesis of the complex macrolide antibiotic tylosin. Catalyzes the hydroxylation of 20-oxo-5-O-beta-mycaminosyltylactone at the C-23 position to yield 5-O-beta-mycaminosyltylonolide. This is 20-oxo-5-O-mycaminosyltylactone 23-monooxygenase from Streptomyces fradiae (Streptomyces roseoflavus).